We begin with the raw amino-acid sequence, 100 residues long: uncharacterized protein (100 aa).

Lys-98 is covalently cross-linked (Isoglutamyl lysine isopeptide (Lys-Gln) (interchain with Q-Cter in protein Pup)).

This is an uncharacterized protein from Mycobacterium tuberculosis (strain CDC 1551 / Oshkosh).